Reading from the N-terminus, the 338-residue chain is MNLNRFERYPLTFGPSPITPLKRLSEHLGGKVELYAKREDCNSGLAFGGNKTRKLEYLIPEAIEQGCDTLVSIGGIQSNQTRQVAAVAAHLGMKCVLVQENWVNYSDAVYDRVGNIEMSRIMGADVRLDAAGFDIGIRPSWEKAMSDVVERGGKPFPIPAGCSEHPYGGLGFVGFAEEVRQQEKELGFKFDYIVVCSVTGSTQAGMVVGFAADGRSKNVIGVDASAKPEQTKAQILRIARHTAELVELGREITEEDVVLDTRFAYPEYGLPNEGTLEAIRLCGSLEGVLTDPVYEGKSMHGMIEMVRRGEFPDGSKVLYAHLGGAPALNAYSFLFRNG.

N6-(pyridoxal phosphate)lysine is present on Lys-51. Residue Ser-78 is the Nucleophile of the active site.

The protein belongs to the ACC deaminase/D-cysteine desulfhydrase family. In terms of assembly, homotrimer. Pyridoxal 5'-phosphate serves as cofactor.

The enzyme catalyses 1-aminocyclopropane-1-carboxylate + H2O = 2-oxobutanoate + NH4(+). Functionally, catalyzes a cyclopropane ring-opening reaction, the irreversible conversion of 1-aminocyclopropane-1-carboxylate (ACC) to ammonia and alpha-ketobutyrate. Allows growth on ACC as a nitrogen source. The polypeptide is 1-aminocyclopropane-1-carboxylate deaminase (Pseudomonas putida (Arthrobacter siderocapsulatus)).